Reading from the N-terminus, the 359-residue chain is MAENYDRASELKAFDEMKIGVKGLVDAGVTKVPRIFHNPHVNVANPKPTSTVVMIPTIDLGGVFESTVVRESVVAKVKDAMEKFGFFQAINHGVPLDVMEKMINGIRRFHDQDPEVRKMFYTRDKTKKLKYHSNADLYESPAASWRDTLSCVMAPDVPKAQDLPEVCGEIMLEYSKEVMKLAELMFEILSEALGLSPNHLKEMDCAKGLWMLCHCFPPCPEPNRTFGGAQHTDRSFLTILLNDNNGGLQVLYDGYWIDVPPNPEALIFNVGDFLQLISNDKFVSMEHRILANGGEEPRISVACFFVHTFTSPSSRVYGPIKELLSELNPPKYRDTTSESSNHYVARKPNGNSSLDHLRI.

In terms of domain architecture, Fe2OG dioxygenase spans 207–308 (KGLWMLCHCF…ISVACFFVHT (102 aa)). The Fe cation site is built by H231, D233, and H287. The segment at 329–359 (PPKYRDTTSESSNHYVARKPNGNSSLDHLRI) is disordered. Residues 349–359 (NGNSSLDHLRI) show a composition bias toward polar residues.

The protein belongs to the iron/ascorbate-dependent oxidoreductase family. Fe(2+) serves as cofactor. In terms of tissue distribution, expressed in leaves and seeds. All cultivars with seed-only-functional allele have low to non-detectable GSL-OH expression in the leaves.

It carries out the reaction gluconapin + AH2 + O2 = progoitrin + A + H2O. Necessary for the hydroxylation of but-3-enyl glucosinolate to 2-hydroxybut-3-enyl glucosinolate, which is toxic to insects, bacteria and nematodes, inhibits seed germination and produces bitter flavors. The polypeptide is Probable 2-oxoacid dependent dioxygenase (Arabidopsis thaliana (Mouse-ear cress)).